The chain runs to 354 residues: Sphingosine-1-phosphate phosphatase 2 (354 aa).

Transmembrane regions (helical) follow at residues 43-63 (YLFR…FLPF), 76-96 (LVVI…ILKW), 115-135 (YGMP…LLIS), and 140-160 (YQYP…LVCL). The interval 91–99 (KDILKWPRP) is phosphatase sequence motif I. A phosphatase sequence motif II region spans residues 118 to 121 (PSTH). The active-site Proton donor is histidine 121. Residues 161–172 (SRLYTGMHTVLD) form a phosphatase sequence motif III region. The active-site Nucleophile is histidine 168. 5 helical membrane passes run 173–193 (ILGG…AWTL), 202–222 (PLFP…YPVS), 235–255 (IVAA…FQLV), 273–293 (TDML…ILLV), and 334–354 (TSVG…LGLL).

It belongs to the type 2 lipid phosphate phosphatase family. As to expression, highly expressed in pancreatic islets. Expressed in lung, small interstince, colon, kideny and brain.

Its subcellular location is the endoplasmic reticulum membrane. It catalyses the reaction sphinganine 1-phosphate + H2O = sphinganine + phosphate. The catalysed reaction is sphing-4-enine 1-phosphate + H2O = sphing-4-enine + phosphate. It carries out the reaction (4R)-hydroxysphinganine 1-phosphate + H2O = (4R)-hydroxysphinganine + phosphate. In terms of biological role, has specific phosphohydrolase activity towards sphingoid base 1-phosphates. Has high phosphohydrolase activity against dihydrosphingosine-1-phosphate and sphingosine-1-phosphate (S1P) in vitro. Sphingosine-1-phosphate phosphatase activity is needed for efficient recycling of sphingosine into the sphingolipid synthesis pathway. May play a role in attenuating intracellular sphingosine 1-phosphate (S1P) signaling. May play a role in pro-inflammatory signaling. Plays a role in the regulation of pancreatic islet beta-cell endoplasmic reticulum stress and proliferation. The sequence is that of Sphingosine-1-phosphate phosphatase 2 from Mus musculus (Mouse).